The primary structure comprises 123 residues: Large ribosomal subunit protein uL14 (123 aa).

This sequence belongs to the universal ribosomal protein uL14 family. Part of the 50S ribosomal subunit. Forms a cluster with proteins L3 and L19. In the 70S ribosome, L14 and L19 interact and together make contacts with the 16S rRNA in bridges B5 and B8.

In terms of biological role, binds to 23S rRNA. Forms part of two intersubunit bridges in the 70S ribosome. In Vibrio parahaemolyticus serotype O3:K6 (strain RIMD 2210633), this protein is Large ribosomal subunit protein uL14.